The primary structure comprises 3010 residues: Probable polyketide synthase 2 (3010 aa).

The Ketosynthase family 3 (KS3) domain maps to 9 to 432; it reads SRDVAVIGIG…GSNACLLLSE (424 aa). Residues cysteine 174, histidine 313, and histidine 353 each act as for beta-ketoacyl synthase activity in the active site. Residues 629-662 are acyl/malonyl transferase; it reads GINPSINVGHSFGEISSACCSGMLDLETACFIVY. Residue serine 639 is the For acyl/malonyl transferase activity of the active site. The interval 944 to 1063 is N-terminal hotdog fold; the sequence is ATQLGYRNDV…ARFSVLKHNS (120 aa). One can recognise a PKS/mFAS DH domain in the interval 944-1235; that stretch reads ATQLGYRNDV…YSSISTDIKN (292 aa). Residue histidine 976 is the Proton acceptor; for dehydratase activity of the active site. The interval 1080 to 1235 is C-terminal hotdog fold; it reads NWTTIKRKEF…YSSISTDIKN (156 aa). Aspartate 1146 serves as the catalytic Proton donor; for dehydratase activity. Residues 2482-2559 form the Carrier domain; the sequence is DNELSIRDDI…QLIQAVIQAV (78 aa). Serine 2519 is subject to O-(pantetheine 4'-phosphoryl)serine.

The cofactor is pantetheine 4'-phosphate.

Probable polyketide synthase. This is Probable polyketide synthase 2 (pks2) from Dictyostelium discoideum (Social amoeba).